The following is a 301-amino-acid chain: Phosphatidylglycerol--prolipoprotein diacylglyceryl transferase (301 aa).

The next 4 membrane-spanning stretches (helical) occupy residues 10 to 30 (IAFSLGPVKVHWYGLMYLASF), 57 to 77 (LLFYAMMGVVLGGRVGYMLFY), 92 to 112 (VWEGGMSFHGGLIGVLLAVAW), and 119 to 139 (LQMFDVLDFGAPLVPVGLGFG). Residue Arg140 participates in a 1,2-diacyl-sn-glycero-3-phospho-(1'-sn-glycerol) binding. A run of 3 helical transmembrane segments spans residues 202 to 222 (PSQLYEAFLEGLVMFIVLWLF), 230 to 250 (YAVSGLFALLYGVFRFLVEFV), and 264 to 284 (LTRGQILSLPLIVIGLFLFWL).

It belongs to the Lgt family.

The protein resides in the cell inner membrane. The catalysed reaction is L-cysteinyl-[prolipoprotein] + a 1,2-diacyl-sn-glycero-3-phospho-(1'-sn-glycerol) = an S-1,2-diacyl-sn-glyceryl-L-cysteinyl-[prolipoprotein] + sn-glycerol 1-phosphate + H(+). It functions in the pathway protein modification; lipoprotein biosynthesis (diacylglyceryl transfer). Functionally, catalyzes the transfer of the diacylglyceryl group from phosphatidylglycerol to the sulfhydryl group of the N-terminal cysteine of a prolipoprotein, the first step in the formation of mature lipoproteins. This Xylella fastidiosa (strain 9a5c) protein is Phosphatidylglycerol--prolipoprotein diacylglyceryl transferase.